A 446-amino-acid chain; its full sequence is Exodeoxyribonuclease 7 large subunit (446 aa).

Belongs to the XseA family. As to quaternary structure, heterooligomer composed of large and small subunits.

The protein localises to the cytoplasm. The enzyme catalyses Exonucleolytic cleavage in either 5'- to 3'- or 3'- to 5'-direction to yield nucleoside 5'-phosphates.. Bidirectionally degrades single-stranded DNA into large acid-insoluble oligonucleotides, which are then degraded further into small acid-soluble oligonucleotides. This chain is Exodeoxyribonuclease 7 large subunit, found in Xanthomonas campestris pv. campestris (strain 8004).